A 1076-amino-acid polypeptide reads, in one-letter code: DNA-directed RNA polymerase subunit beta (1076 aa).

It belongs to the RNA polymerase beta chain family. In plastids the minimal PEP RNA polymerase catalytic core is composed of four subunits: alpha, beta, beta', and beta''. When a (nuclear-encoded) sigma factor is associated with the core the holoenzyme is formed, which can initiate transcription.

It localises to the plastid. Its subcellular location is the chloroplast. It carries out the reaction RNA(n) + a ribonucleoside 5'-triphosphate = RNA(n+1) + diphosphate. DNA-dependent RNA polymerase catalyzes the transcription of DNA into RNA using the four ribonucleoside triphosphates as substrates. The chain is DNA-directed RNA polymerase subunit beta from Triticum aestivum (Wheat).